The primary structure comprises 94 residues: CRISPR-associated endoribonuclease Cas2 (94 aa).

D11 contributes to the Mg(2+) binding site.

This sequence belongs to the CRISPR-associated endoribonuclease Cas2 protein family. As to quaternary structure, homodimer, forms a heterotetramer with a Cas1 homodimer. Mg(2+) serves as cofactor.

In terms of biological role, CRISPR (clustered regularly interspaced short palindromic repeat), is an adaptive immune system that provides protection against mobile genetic elements (viruses, transposable elements and conjugative plasmids). CRISPR clusters contain sequences complementary to antecedent mobile elements and target invading nucleic acids. CRISPR clusters are transcribed and processed into CRISPR RNA (crRNA). Functions as a ssRNA-specific endoribonuclease. Involved in the integration of spacer DNA into the CRISPR cassette. This is CRISPR-associated endoribonuclease Cas2 from Thermus thermophilus (strain ATCC 27634 / DSM 579 / HB8).